The sequence spans 500 residues: Cytochrome P450 71D13 (500 aa).

A helical; Signal-anchor for type II membrane protein transmembrane segment spans residues 3–23 (LQISSAIIILVVTYTISLLII). Cys-439 is a binding site for heme.

It belongs to the cytochrome P450 family. It depends on heme as a cofactor.

The protein localises to the endoplasmic reticulum membrane. It catalyses the reaction (4S)-limonene + reduced [NADPH--hemoprotein reductase] + O2 = (1S,6R)-isopiperitenol + oxidized [NADPH--hemoprotein reductase] + H2O + H(+). Functionally, hydroxylates (-)-(4S)-limonene to (-)-trans-isopiperitenol, a precursor of (-)-menthol, responsible for the cooling sensation of peppermint. In Mentha piperita (Peppermint), this protein is Cytochrome P450 71D13 (CYP71D13).